Here is a 170-residue protein sequence, read N- to C-terminus: Ribulose bisphosphate carboxylase small subunit, chloroplastic (170 aa).

Transit peptides (chloroplast) lie at residues 1–46 (MAPT…GRIR) and 1–47 (MAPT…RIRC).

The protein belongs to the RuBisCO small chain family. Heterohexadecamer of 8 large and 8 small subunits.

Its subcellular location is the plastid. It is found in the chloroplast. Its function is as follows. RuBisCO catalyzes two reactions: the carboxylation of D-ribulose 1,5-bisphosphate, the primary event in carbon dioxide fixation, as well as the oxidative fragmentation of the pentose substrate. Both reactions occur simultaneously and in competition at the same active site. Although the small subunit is not catalytic it is essential for maximal activity. In Zea mays (Maize), this protein is Ribulose bisphosphate carboxylase small subunit, chloroplastic.